Here is a 236-residue protein sequence, read N- to C-terminus: Endonuclease V (236 aa).

Mg(2+)-binding residues include aspartate 47 and aspartate 115.

The protein belongs to the endonuclease V family. Mg(2+) serves as cofactor.

Its subcellular location is the cytoplasm. The catalysed reaction is Endonucleolytic cleavage at apurinic or apyrimidinic sites to products with a 5'-phosphate.. In terms of biological role, DNA repair enzyme involved in the repair of deaminated bases. Selectively cleaves double-stranded DNA at the second phosphodiester bond 3' to a deoxyinosine leaving behind the intact lesion on the nicked DNA. The polypeptide is Endonuclease V (Xanthomonas campestris pv. campestris (strain B100)).